We begin with the raw amino-acid sequence, 188 residues long: PRA1 family protein 3 (188 aa).

M1 carries the N-acetylmethionine modification. Over 1 to 35 the chain is Cytoplasmic; sequence MDVNIAPLRAWDDFFPGSDRFAQPDFRDISKWNNR. 2 helical membrane passes run 36–56 and 57–77; these read VVSNLLYYQTNYLVVAAMMIS and VVGFLSPFNMILGGIVVVLVF. Topologically, residues 78 to 93 are cytoplasmic; the sequence is TGFVWAAHNKDALRRL. 2 helical membrane-spanning segments follow: residues 94–114 and 115–135; these read KKRYPTTFVMVVMLASYFLIS and MFGGVMVFVFGITFPLLLMFI. The tract at residues 103–117 is required for homodimer formation and heterodimer formation with ARL6IP1; sequence MVVMLASYFLISMFG. Over 136-188 the chain is Cytoplasmic; the sequence is HASLRLRNLKNKLENKMEGIGLKRTPMGIVLDALEQQEEGINRLTDYISKVKE. The tract at residues 136–188 is targeting to endoplasmic reticulum membrane; that stretch reads HASLRLRNLKNKLENKMEGIGLKRTPMGIVLDALEQQEEGINRLTDYISKVKE.

This sequence belongs to the PRA1 family. As to quaternary structure, homodimer. Heterodimer with ARL6IP1. Forms multimers. Interacts with ARL6. Interacts with prenylated RAB1A and RAB3A. Interacts with SLC1A1/EAAC1. Interacts with RTN2 (via first transmembrane domain). Does not interact with VAMP1, VAMP2 or VAMP3.

It is found in the endoplasmic reticulum membrane. It localises to the cell membrane. The protein resides in the cytoplasm. The protein localises to the cytoskeleton. In terms of biological role, regulates intracellular concentrations of taurine and glutamate. Negatively modulates SLC1A1/EAAC1 glutamate transport activity by decreasing its affinity for glutamate in a PKC activity-dependent manner. Plays a role in the retention of SLC1A1/EAAC1 in the endoplasmic reticulum. The chain is PRA1 family protein 3 (ARL6IP5) from Macaca fascicularis (Crab-eating macaque).